Consider the following 176-residue polypeptide: ATP synthase subunit b (176 aa).

Residues 27-47 (FFVFSFLTLILVVTIVTLLVY) traverse the membrane as a helical segment.

Belongs to the ATPase B chain family. F-type ATPases have 2 components, F(1) - the catalytic core - and F(0) - the membrane proton channel. F(1) has five subunits: alpha(3), beta(3), gamma(1), delta(1), epsilon(1). F(0) has three main subunits: a(1), b(2) and c(10-14). The alpha and beta chains form an alternating ring which encloses part of the gamma chain. F(1) is attached to F(0) by a central stalk formed by the gamma and epsilon chains, while a peripheral stalk is formed by the delta and b chains.

The protein resides in the cell membrane. Its function is as follows. F(1)F(0) ATP synthase produces ATP from ADP in the presence of a proton or sodium gradient. F-type ATPases consist of two structural domains, F(1) containing the extramembraneous catalytic core and F(0) containing the membrane proton channel, linked together by a central stalk and a peripheral stalk. During catalysis, ATP synthesis in the catalytic domain of F(1) is coupled via a rotary mechanism of the central stalk subunits to proton translocation. Functionally, component of the F(0) channel, it forms part of the peripheral stalk, linking F(1) to F(0). This Metamycoplasma arthritidis (strain 158L3-1) (Mycoplasma arthritidis) protein is ATP synthase subunit b.